We begin with the raw amino-acid sequence, 871 residues long: Pentatricopeptide repeat-containing protein At3g06920 (871 aa).

PPR repeat units follow at residues 97 to 131 (CPES…GFGP), 132 to 166 (SVNT…KFRP), 167 to 201 (AFSA…GYEP), 202 to 236 (TVHL…SLDA), 237 to 271 (DIVL…GLKP), 272 to 306 (DEVT…RRVP), 307 to 341 (CTYA…GSIP), 342 to 372 (SVIA…MKKD), 376 to 410 (NLST…GLFP), 411 to 445 (NVRT…VCTP), 446 to 480 (DEIT…DCRT), 481 to 515 (NSIV…NCSP), 516 to 550 (DLQL…RFVP), 551 to 585 (DARS…GCVL), 586 to 620 (DTRA…GFEP), 621 to 655 (TVVT…RIEL), 656 to 690 (NVVI…GLTP), 691 to 725 (NLYT…KCTP), 726 to 760 (NQVT…GMKP), 761 to 795 (STIS…GGVP), and 796 to 830 (DSAC…GLPI).

Belongs to the PPR family. P subfamily.

This is Pentatricopeptide repeat-containing protein At3g06920 from Arabidopsis thaliana (Mouse-ear cress).